Consider the following 221-residue polypeptide: HP1-HOAP-interacting protein (221 aa).

The interval 69 to 113 (NAKRHKMARETAASITDVSGSQSSSHQSAPSLHVSGQSSEFGASY) is disordered. The segment covering 86–103 (VSGSQSSSHQSAPSLHVS) has biased composition (low complexity).

Component of the HipHop-HOAP telomere-capping complex, composed of at least HipHop and cav/HOAP, and may include Su(var)205/HP1; HipHop and cav/HOAP, but not Su(var)205, are interdependent for their protein stability. Interacts (via N-terminus) with cav/HOAP and Su(var)205/HP1. The HipHop-HOAP complex recruits the MTV complex, consisting of moi/modigliani, tea and ver/verrocchio, to telomeres to form the terminin telomere-capping complex.

Its subcellular location is the nucleus. The protein localises to the chromosome. It localises to the telomere. Its function is as follows. Part of the HipHop-HOAP complex that recruits the MTV complex to form the terminin telomere-capping complex, which binds to chromosome ends in a sequence-independent manner and prevents telomere fusion. This chain is HP1-HOAP-interacting protein, found in Drosophila melanogaster (Fruit fly).